The following is a 332-amino-acid chain: MTRFLDSDAMGDEELVERTLRPQYLREYIGQDKVKDQLKIFIEAAKLRDESLDHVLLFGPPGLGKTTMAFVIANELGVNLKQTSGPAIEKSGDLVAILNDLEPGDVLFIDEIHRMPMAVEEVLYSAMEDFYIDIMIGAGETSRSVHLDLPPFTLIGATTRAGMLSNPLRARFGITGHMEYYEENDLTEIIERTADIFEMKITYEAASELARRSRGTPRIANRLLKRVRDYAQIMGDGLIDDNITDKALTMLDVDHEGLDYVDQKILRTMIEMYNGGPVGLGTLSVNIAEERDTVEDMYEPYLIQKGFIMRTRTGRVATDKAYEHLGYQRFDK.

A large ATPase domain (RuvB-L) region spans residues 1-181 (MTRFLDSDAM…FGITGHMEYY (181 aa)). ATP contacts are provided by residues Leu-20, Arg-21, Gly-62, Lys-65, Thr-66, Thr-67, 128–130 (EDF), Arg-171, Tyr-181, and Arg-218. Residue Thr-66 participates in Mg(2+) binding. The small ATPAse domain (RuvB-S) stretch occupies residues 182–252 (EENDLTEIIE…ITDKALTMLD (71 aa)). Residues 255–332 (HEGLDYVDQK…EHLGYQRFDK (78 aa)) form a head domain (RuvB-H) region. DNA is bound by residues Arg-291, Arg-310, Arg-312, and Arg-315.

Belongs to the RuvB family. As to quaternary structure, homohexamer. Forms an RuvA(8)-RuvB(12)-Holliday junction (HJ) complex. HJ DNA is sandwiched between 2 RuvA tetramers; dsDNA enters through RuvA and exits via RuvB. An RuvB hexamer assembles on each DNA strand where it exits the tetramer. Each RuvB hexamer is contacted by two RuvA subunits (via domain III) on 2 adjacent RuvB subunits; this complex drives branch migration. In the full resolvosome a probable DNA-RuvA(4)-RuvB(12)-RuvC(2) complex forms which resolves the HJ.

It is found in the cytoplasm. The enzyme catalyses ATP + H2O = ADP + phosphate + H(+). In terms of biological role, the RuvA-RuvB-RuvC complex processes Holliday junction (HJ) DNA during genetic recombination and DNA repair, while the RuvA-RuvB complex plays an important role in the rescue of blocked DNA replication forks via replication fork reversal (RFR). RuvA specifically binds to HJ cruciform DNA, conferring on it an open structure. The RuvB hexamer acts as an ATP-dependent pump, pulling dsDNA into and through the RuvAB complex. RuvB forms 2 homohexamers on either side of HJ DNA bound by 1 or 2 RuvA tetramers; 4 subunits per hexamer contact DNA at a time. Coordinated motions by a converter formed by DNA-disengaged RuvB subunits stimulates ATP hydrolysis and nucleotide exchange. Immobilization of the converter enables RuvB to convert the ATP-contained energy into a lever motion, pulling 2 nucleotides of DNA out of the RuvA tetramer per ATP hydrolyzed, thus driving DNA branch migration. The RuvB motors rotate together with the DNA substrate, which together with the progressing nucleotide cycle form the mechanistic basis for DNA recombination by continuous HJ branch migration. Branch migration allows RuvC to scan DNA until it finds its consensus sequence, where it cleaves and resolves cruciform DNA. This chain is Holliday junction branch migration complex subunit RuvB, found in Streptococcus agalactiae serotype Ia (strain ATCC 27591 / A909 / CDC SS700).